Here is a 95-residue protein sequence, read N- to C-terminus: 6 kDa early secretory antigenic target (95 aa).

2 consecutive transmembrane segments (helical) span residues 11–43 (IEAAASAIQGNVTSIHSLLDEGKQSLTKLAAAW) and 49–85 (EAYQGVQQKWDATATELNNALQNLARTISEAGQAMAS). A coiled-coil region spans residues 56 to 87 (QKWDATATELNNALQNLARTISEAGQAMASTE).

It belongs to the WXG100 family. ESAT-6 subfamily. In terms of assembly, forms a tight 1:1 complex with EsxB (CFP-10).

The protein localises to the secreted. It localises to the host membrane. In terms of biological role, a secreted protein. Acts as a strong host T-cell antigen. Plays a number of roles in modulating the host's immune response to infection as well as being responsible for bacterial escape into the host cytoplasm. The chain is 6 kDa early secretory antigenic target (esxA) from Mycobacterium bovis (strain ATCC BAA-935 / AF2122/97).